Consider the following 702-residue polypeptide: MSSDIIMAGLGRPFTLGFLYDARREKLIPGFSLFGDETLQKYATSTPQHSSDFQIVASDSVESKSNVMDIEASLGVSFLGGLVEVGGSAKYLNNTKKYQNQSRVTLQYKVTTTFKQFKAPPGKVNVQQTAISDKNVATHVVTAILFGANAFFVFDSDKVEDSNLQDIQGKMEAVIKKIPSVSIEGSGSVQLTDEEKSLASNLSCKFHGDFLLESLPTTFEEAVMTYQKLPELVGEEASDGVPMKVWLVPLTRFYSKADLLVRDISQGLVRKVHSILEDLHKLKRRANDSLEDDTVKLFPLLEKKLKNFQKNYSDYMTTFRRTISQKLQSIRKGDEDETAMLQLFEDRLRSPFNIDSLNMWMEITEREINVLRSCIDIIEETKHKAVLSQSQMVKDLLDSEVMHAVCYVFTYVTDKDHYLDALRDYLKSPNSRPARVRPVVTWVASNTVLETMREKAHLFRSLAKDMENRCVHFLVASIVNLKVEGAAIHYYRESVLIEPNFKHPIISAVEKIVDRRDLLWYDCELTLDPNTSHPSLYLSEGNKKAVTGTLRAFDNNPERFGLWQQVLCNKGLSRRHYWEVEWNGYVIVGVTYSSIGRKNIDIQSFIGFSETSWTLMFIPKNGVAVKGARRSVSYYFISDLAFPPLGLYHDCHASTLSFYKVSDNVLNHFHTIEIKPKLSEPVYAIIRIGDEDRPYHGTVRLL.

The interval 2–265 (SSDIIMAGLG…KADLLVRDIS (264 aa)) is structural MACPF/CDC pore-forming domain. N-linked (GlcNAc...) asparagine glycans are attached at residues N93, N100, N201, N287, and N311. Positions 266–385 (QGLVRKVHSI…DIIEETKHKA (120 aa)) are structural FAT domain. Positions 386 to 513 (VLSQSQMVKD…PIISAVEKIV (128 aa)) are thioredoxin (THX) domain. Residues 505–702 (IISAVEKIVD…RPYHGTVRLL (198 aa)) enclose the B30.2/SPRY domain. An N-linked (GlcNAc...) asparagine glycan is attached at N530.

Belongs to the SNTX/VTX toxin family. In terms of assembly, heterodimer of alpha and beta subunits; non-covalently linked. Also associates into tetramers or even higher aggregates. Post-translationally, intrachain disulfide bonds may be present in the heterodimer. As to expression, expressed by the venom gland.

It is found in the secreted. This heterodimer induces potent hemolytic activities (when tested on rabbit erythrocytes, EC(50)=25-56 ng/mL) due to its ability to form pores in the cell membrane. The pore may be composed of 10 alpha/beta heterodimers. The toxin shows cardiovascular effects that include a vasorelaxant action that may involve the L-arginine-nitric oxid synthase pathway. In addition, it displays edema-inducing activities, increases vascular permeability. It also shows myotoxic activities and interferes irreversibly with neuromuscular function. It also induces irreversible platelet aggregation in rabbit or rat (but not in human or mouse) whole blood. In addition, it has been observed to increase spontaneous quantal acetylcholine release from isolated frog cutaneous pectoris motor endings. This Scorpaena plumieri (Spotted scorpionfish) protein is Cytolytic toxin-alpha.